A 721-amino-acid polypeptide reads, in one-letter code: Polyribonucleotide nucleotidyltransferase (721 aa).

Mg(2+)-binding residues include D490 and D496. The region spanning 557–623 is the KH domain; the sequence is PRIISIKINP…RIAGLTKEAK (67 aa). Residues 625-693 form the S1 motif domain; sequence GEEYEGTVVK…DRGKIDLIRP (69 aa). Residues 693-721 form a disordered region; sequence PELEGKIAPREPRAPRGGGDRGPRPPRRD.

The protein belongs to the polyribonucleotide nucleotidyltransferase family. Mg(2+) serves as cofactor.

The protein resides in the cytoplasm. The enzyme catalyses RNA(n+1) + phosphate = RNA(n) + a ribonucleoside 5'-diphosphate. Its function is as follows. Involved in mRNA degradation. Catalyzes the phosphorolysis of single-stranded polyribonucleotides processively in the 3'- to 5'-direction. The protein is Polyribonucleotide nucleotidyltransferase of Deinococcus deserti (strain DSM 17065 / CIP 109153 / LMG 22923 / VCD115).